We begin with the raw amino-acid sequence, 108 residues long: Large ribosomal subunit protein uL24 (108 aa).

It belongs to the universal ribosomal protein uL24 family. As to quaternary structure, part of the 50S ribosomal subunit.

Its function is as follows. One of two assembly initiator proteins, it binds directly to the 5'-end of the 23S rRNA, where it nucleates assembly of the 50S subunit. One of the proteins that surrounds the polypeptide exit tunnel on the outside of the subunit. This chain is Large ribosomal subunit protein uL24, found in Trichlorobacter lovleyi (strain ATCC BAA-1151 / DSM 17278 / SZ) (Geobacter lovleyi).